The following is a 239-amino-acid chain: tRNA (guanine-N(1)-)-methyltransferase (239 aa).

Residues glycine 115 and 134–139 contribute to the S-adenosyl-L-methionine site; that span reads MGDFVL. The tract at residues 210–239 is disordered; the sequence is QQQREQRTQERRPDLWNRWQQIQNPTPPAP. The segment covering 211–224 has biased composition (basic and acidic residues); sequence QQREQRTQERRPDL.

Belongs to the RNA methyltransferase TrmD family. In terms of assembly, homodimer.

The protein localises to the cytoplasm. It carries out the reaction guanosine(37) in tRNA + S-adenosyl-L-methionine = N(1)-methylguanosine(37) in tRNA + S-adenosyl-L-homocysteine + H(+). Its function is as follows. Specifically methylates guanosine-37 in various tRNAs. This Synechococcus sp. (strain CC9311) protein is tRNA (guanine-N(1)-)-methyltransferase.